A 358-amino-acid chain; its full sequence is tRNA (guanine-N(7)-)-methyltransferase (358 aa).

A disordered region spans residues 1 to 29; it reads MTPPPPKRQKRDEYRKATAEATSQSGASD. S-adenosyl-L-methionine contacts are provided by residues G99 and 122–123; that span reads EI. Residues 151 to 186 show a composition bias toward low complexity; it reads TATAASETPSQQQAQIDGKQANANAAADAASPAPST. The segment at 151–194 is disordered; the sequence is TATAASETPSQQQAQIDGKQANANAAADAASPAPSTDTEHMPTT. Residues 209–210 and C229 contribute to the S-adenosyl-L-methionine site; that span reads NT. D232 is an active-site residue. 330–332 contributes to the S-adenosyl-L-methionine binding site; sequence TEE.

The protein belongs to the class I-like SAM-binding methyltransferase superfamily. TrmB family. Forms a complex with trm82.

Its subcellular location is the nucleus. It carries out the reaction guanosine(46) in tRNA + S-adenosyl-L-methionine = N(7)-methylguanosine(46) in tRNA + S-adenosyl-L-homocysteine. It functions in the pathway tRNA modification; N(7)-methylguanine-tRNA biosynthesis. In terms of biological role, catalyzes the formation of N(7)-methylguanine at position 46 (m7G46) in tRNA. The chain is tRNA (guanine-N(7)-)-methyltransferase (trm8) from Aspergillus fumigatus (strain CBS 144.89 / FGSC A1163 / CEA10) (Neosartorya fumigata).